The following is a 289-amino-acid chain: MKLSFTKMHGAGNDFVVLDGYSHTLPPLTDVQVRALADRHFGIGADQLLVVEKPTVDGADFKYRIFNCDGGEVEHCGNGARCFVKFVTDRGLTDKRSVRVQVMKGLITLTMQDNGEVVVDMGAPVFEPAQVPFDASGLDGRTDGNDTLWPLDVGGATRWVSTVSMGNPHAVQVVDDAEAYPVLAEGPLIERHARFPKRVNAGFMQIVSRHEVKLRVYERGAGETLACGTGACAAVAAGIRRGLLDTPVTVHTHGGTLTISWDGAHDERAALTMAGPATTVFEGEIELNV.

Substrate is bound by residues N13, Q47, and N67. The active-site Proton donor is the C76. Substrate contacts are provided by residues 77–78, N167, N200, and 218–219; these read GN and ER. The Proton acceptor role is filled by C227. 228 to 229 lines the substrate pocket; it reads GT.

It belongs to the diaminopimelate epimerase family. In terms of assembly, homodimer.

The protein resides in the cytoplasm. The catalysed reaction is (2S,6S)-2,6-diaminopimelate = meso-2,6-diaminopimelate. It functions in the pathway amino-acid biosynthesis; L-lysine biosynthesis via DAP pathway; DL-2,6-diaminopimelate from LL-2,6-diaminopimelate: step 1/1. Catalyzes the stereoinversion of LL-2,6-diaminopimelate (L,L-DAP) to meso-diaminopimelate (meso-DAP), a precursor of L-lysine and an essential component of the bacterial peptidoglycan. This is Diaminopimelate epimerase from Burkholderia vietnamiensis (strain G4 / LMG 22486) (Burkholderia cepacia (strain R1808)).